An 83-amino-acid chain; its full sequence is Retinal cone rhodopsin-sensitive cGMP 3',5'-cyclic phosphodiesterase subunit gamma (83 aa).

The disordered stretch occupies residues 1-54 (MSDSPSLSPPAPSQGPTTPRKGPPKFKQRQTRQFKSKPPKKGVKGFGDDIPGME). Over residues 22-43 (GPPKFKQRQTRQFKSKPPKKGV) the composition is skewed to basic residues.

The protein belongs to the rod/cone cGMP-PDE gamma subunit family. In terms of assembly, tetramer composed of two catalytic chains (alpha and beta), and two inhibitory chains (gamma).

It catalyses the reaction 3',5'-cyclic GMP + H2O = GMP + H(+). Functionally, participates in processes of transmission and amplification of the visual signal. cGMP-PDEs are the effector molecules in G-protein-mediated phototransduction in vertebrate rods and cones. The polypeptide is Retinal cone rhodopsin-sensitive cGMP 3',5'-cyclic phosphodiesterase subunit gamma (Pde6h) (Mus musculus (Mouse)).